Consider the following 156-residue polypeptide: Small ribosomal subunit protein uS7A/uS7B (156 aa).

It belongs to the universal ribosomal protein uS7 family. In terms of assembly, part of the 30S ribosomal subunit. Contacts proteins S9 and S11.

Functionally, one of the primary rRNA binding proteins, it binds directly to 16S rRNA where it nucleates assembly of the head domain of the 30S subunit. Is located at the subunit interface close to the decoding center, probably blocks exit of the E-site tRNA. The polypeptide is Small ribosomal subunit protein uS7A/uS7B (Cereibacter sphaeroides (strain ATCC 17029 / ATH 2.4.9) (Rhodobacter sphaeroides)).